Consider the following 256-residue polypeptide: Protein TV0584 (256 aa).

Belongs to the CinA family.

This chain is Protein TV0584, found in Thermoplasma volcanium (strain ATCC 51530 / DSM 4299 / JCM 9571 / NBRC 15438 / GSS1).